Reading from the N-terminus, the 808-residue chain is Phospholipase D alpha 1 (808 aa).

Residues 1–125 (MAQILLHGTL…LEGEEIDKWV (125 aa)) enclose the C2 domain. Asp186 contacts Ca(2+). The region spanning 326–364 (TMFTHHQKIVVVDSELPSGESEKRRILSFVGGIDLCDGR) is the PLD phosphodiesterase 1 domain. Active-site residues include His331, Lys333, and Asp338. Residue His331 coordinates a 1,2-diacyl-sn-glycero-3-phosphate. Ca(2+) contacts are provided by His370 and His404. The a 1,2-diacyl-sn-glycero-3-phosphate site is built by Gln520 and His659. In terms of domain architecture, PLD phosphodiesterase 2 spans 654 to 681 (FMIYVHSKMMIVDDEYIIVGSANINQRS). Active-site residues include His659, Lys661, and Asp666. Glu720 is a Ca(2+) binding site.

It belongs to the phospholipase D family. C2-PLD subfamily. It depends on Ca(2+) as a cofactor.

The catalysed reaction is a 1,2-diacyl-sn-glycero-3-phosphocholine + H2O = a 1,2-diacyl-sn-glycero-3-phosphate + choline + H(+). Its function is as follows. Hydrolyzes glycerol-phospholipids at the terminal phosphodiesteric bond. Plays an important role in various cellular processes. In Nicotiana tabacum (Common tobacco), this protein is Phospholipase D alpha 1 (PLD1).